Consider the following 632-residue polypeptide: 1-deoxy-D-xylulose-5-phosphate synthase (632 aa).

Thiamine diphosphate-binding positions include H79 and G120–A122. D152 is a binding site for Mg(2+). Thiamine diphosphate is bound by residues G153 to A154, N181, F293, and E377. Mg(2+) is bound at residue N181.

The protein belongs to the transketolase family. DXPS subfamily. As to quaternary structure, homodimer. The cofactor is Mg(2+). Thiamine diphosphate is required as a cofactor.

The catalysed reaction is D-glyceraldehyde 3-phosphate + pyruvate + H(+) = 1-deoxy-D-xylulose 5-phosphate + CO2. The protein operates within metabolic intermediate biosynthesis; 1-deoxy-D-xylulose 5-phosphate biosynthesis; 1-deoxy-D-xylulose 5-phosphate from D-glyceraldehyde 3-phosphate and pyruvate: step 1/1. In terms of biological role, catalyzes the acyloin condensation reaction between C atoms 2 and 3 of pyruvate and glyceraldehyde 3-phosphate to yield 1-deoxy-D-xylulose-5-phosphate (DXP). The chain is 1-deoxy-D-xylulose-5-phosphate synthase from Parabacteroides distasonis (strain ATCC 8503 / DSM 20701 / CIP 104284 / JCM 5825 / NCTC 11152).